The sequence spans 293 residues: tRNA pseudouridine synthase B (293 aa).

The Nucleophile role is filled by aspartate 39.

It belongs to the pseudouridine synthase TruB family. Type 1 subfamily.

The enzyme catalyses uridine(55) in tRNA = pseudouridine(55) in tRNA. In terms of biological role, responsible for synthesis of pseudouridine from uracil-55 in the psi GC loop of transfer RNAs. The protein is tRNA pseudouridine synthase B of Streptococcus thermophilus (strain ATCC BAA-250 / LMG 18311).